A 292-amino-acid polypeptide reads, in one-letter code: Glycine--tRNA ligase alpha subunit (292 aa).

The protein belongs to the class-II aminoacyl-tRNA synthetase family. As to quaternary structure, tetramer of two alpha and two beta subunits.

It is found in the cytoplasm. It catalyses the reaction tRNA(Gly) + glycine + ATP = glycyl-tRNA(Gly) + AMP + diphosphate. The polypeptide is Glycine--tRNA ligase alpha subunit (Clostridioides difficile (strain 630) (Peptoclostridium difficile)).